A 237-amino-acid chain; its full sequence is uncharacterized protein (237 aa).

It belongs to the bactofilin family.

This is an uncharacterized protein from Bacillus subtilis (strain 168).